A 587-amino-acid polypeptide reads, in one-letter code: Serine/threonine-protein phosphatase 2A 65 kDa regulatory subunit A beta isoform (587 aa).

S2 carries the N-acetylserine modification. 14 HEAT repeats span residues 2–42 (SMID…ALGE), 44–80 (RTRK…YVGG), 81–119 (VEYA…QMRE), 158–196 (DMLK…TVES), 197–235 (AHLK…LLEP), 236–274 (QDCV…AVGP), 275–313 (EPTR…ILNP), 315–352 (IAIQ…VLGK), 353–391 (DATI…VIGI), 393–430 (LLSQ…QLGV), 432–469 (FFDD…EFGP), 470–508 (EWAM…VMGS), 509–547 (EITC…IVDQ), and 549–586 (VVEK…VMMS).

This sequence belongs to the phosphatase 2A regulatory subunit A family. In terms of assembly, PP2A consists of a common heterodimeric core enzyme, composed of a 36 kDa catalytic subunit (subunit C) and a 65 kDa constant regulatory subunit (subunit A), that associates with a variety of regulatory subunits such as subunits B (the R2/B/PR55/B55, R3/B''/PR72/PR130/PR59 and R5/B'/B56 families). Interacts with B'THETA. Interacts with SRK2E/OST1. Interacts with SIC/RON3. As to expression, ubiquitous, with higher levels in roots and flowers (at protein level).

It is found in the cytoplasm. Its subcellular location is the cytosol. The protein localises to the nucleus. The protein resides in the peroxisome. Its function is as follows. The A subunit of protein phosphatase 2A serves as a scaffolding molecule to coordinate the assembly of the catalytic subunit and a variable regulatory B subunit. Involved during developmental process such as seedling and floral developments. Seems to act as a negative regulator of PP2A catalytic activity. Associates with the serine/threonine-protein phosphatase PP2A catalytic subunit C and regulatory subunit B' to positively regulates beta-oxidation of fatty acids and protoauxins in peroxisomes by dephosphorylating peroxisomal beta-oxidation-related proteins. The sequence is that of Serine/threonine-protein phosphatase 2A 65 kDa regulatory subunit A beta isoform (PP2AA2) from Arabidopsis thaliana (Mouse-ear cress).